The primary structure comprises 105 residues: Sec-independent protein translocase protein TatA (105 aa).

The helical transmembrane segment at 1–21 threads the bilayer; sequence MSLGPWEIGIIVLLIIVLFGA. The segment covering 41–50 has biased composition (basic and acidic residues); the sequence is EVKEMNKDGD. The interval 41–105 is disordered; the sequence is EVKEMNKDGD…QNYEDPNRTS (65 aa). The span at 52–92 shows a compositional bias: low complexity; sequence PEQQQQPQQQIAPNQIEAPQPNFEQHYQGQQVQQPQNPQTP. Residues 96 to 105 are compositionally biased toward basic and acidic residues; sequence QNYEDPNRTS.

Belongs to the TatA/E family. As to quaternary structure, the Tat system comprises two distinct complexes: a TatABC complex, containing multiple copies of TatA, TatB and TatC subunits, and a separate TatA complex, containing only TatA subunits. Substrates initially bind to the TatABC complex, which probably triggers association of the separate TatA complex to form the active translocon.

Its subcellular location is the cell membrane. Its function is as follows. Part of the twin-arginine translocation (Tat) system that transports large folded proteins containing a characteristic twin-arginine motif in their signal peptide across membranes. TatA could form the protein-conducting channel of the Tat system. This chain is Sec-independent protein translocase protein TatA, found in Corynebacterium glutamicum (strain ATCC 13032 / DSM 20300 / JCM 1318 / BCRC 11384 / CCUG 27702 / LMG 3730 / NBRC 12168 / NCIMB 10025 / NRRL B-2784 / 534).